Here is a 95-residue protein sequence, read N- to C-terminus: CRISPR-associated endoribonuclease Cas2 (95 aa).

Asp10 provides a ligand contact to Mg(2+).

Belongs to the CRISPR-associated endoribonuclease Cas2 protein family. Homodimer, forms a heterotetramer with a Cas1 homodimer. Requires Mg(2+) as cofactor.

In terms of biological role, CRISPR (clustered regularly interspaced short palindromic repeat), is an adaptive immune system that provides protection against mobile genetic elements (viruses, transposable elements and conjugative plasmids). CRISPR clusters contain sequences complementary to antecedent mobile elements and target invading nucleic acids. CRISPR clusters are transcribed and processed into CRISPR RNA (crRNA). Functions as a ssRNA-specific endoribonuclease. Involved in the integration of spacer DNA into the CRISPR cassette. In Geobacter sulfurreducens (strain ATCC 51573 / DSM 12127 / PCA), this protein is CRISPR-associated endoribonuclease Cas2.